The following is a 368-amino-acid chain: Nicotinate-nucleotide--dimethylbenzimidazole phosphoribosyltransferase (368 aa).

Glutamate 314 serves as the catalytic Proton acceptor. Residues aspartate 344 to valine 368 are disordered. The segment covering alanine 349–glycine 360 has biased composition (low complexity).

Belongs to the CobT family.

It carries out the reaction 5,6-dimethylbenzimidazole + nicotinate beta-D-ribonucleotide = alpha-ribazole 5'-phosphate + nicotinate + H(+). Its pathway is nucleoside biosynthesis; alpha-ribazole biosynthesis; alpha-ribazole from 5,6-dimethylbenzimidazole: step 1/2. Functionally, catalyzes the synthesis of alpha-ribazole-5'-phosphate from nicotinate mononucleotide (NAMN) and 5,6-dimethylbenzimidazole (DMB). This chain is Nicotinate-nucleotide--dimethylbenzimidazole phosphoribosyltransferase, found in Corynebacterium efficiens (strain DSM 44549 / YS-314 / AJ 12310 / JCM 11189 / NBRC 100395).